The primary structure comprises 85 residues: MSSGGLLLLLGLLTLCAELIPVSSRQRHRDCDKPPDKGNCGPVRRAFYYDTRLKTCKAFQYRGCNGNGNHFKTETLCRCECLVYP.

Residues 1–24 form the signal peptide; sequence MSSGGLLLLLGLLTLCAELIPVSS. Residues 31–81 form the BPTI/Kunitz inhibitor domain; that stretch reads CDKPPDKGNCGPVRRAFYYDTRLKTCKAFQYRGCNGNGNHFKTETLCRCEC. Cystine bridges form between Cys-31-Cys-81, Cys-40-Cys-64, and Cys-56-Cys-77.

Belongs to the venom Kunitz-type family. In terms of assembly, heterodimer; disulfide-linked. The A chains have phospholipase A2 activity and the B chains show homology with the basic protease inhibitors. Expressed by the venom gland.

The protein resides in the secreted. In terms of biological role, beta-1-bungarotoxin is a presynaptic neurotoxin of the venom. The B chain is homologous to venom basic protease inhibitors but has no protease inhibitor activity and blocks voltage-gated potassium channels (Kv). The protein is Kunitz-type serine protease inhibitor homolog beta-bungarotoxin B1 chain, major component of Bungarus multicinctus (Many-banded krait).